The following is a 591-amino-acid chain: Aspartate--tRNA(Asp/Asn) ligase (591 aa).

Residue Glu-176 coordinates L-aspartate. The interval 200–203 is aspartate; it reads QLFK. Residue Arg-222 participates in L-aspartate binding. Residues 222 to 224 and Gln-231 each bind ATP; that span reads RDE. Position 450 (His-450) interacts with L-aspartate. ATP is bound at residue Glu-484. Arg-491 lines the L-aspartate pocket. 536–539 contributes to the ATP binding site; that stretch reads GLDR.

The protein belongs to the class-II aminoacyl-tRNA synthetase family. Type 1 subfamily. As to quaternary structure, homodimer.

It is found in the cytoplasm. The catalysed reaction is tRNA(Asx) + L-aspartate + ATP = L-aspartyl-tRNA(Asx) + AMP + diphosphate. Functionally, aspartyl-tRNA synthetase with relaxed tRNA specificity since it is able to aspartylate not only its cognate tRNA(Asp) but also tRNA(Asn). Reaction proceeds in two steps: L-aspartate is first activated by ATP to form Asp-AMP and then transferred to the acceptor end of tRNA(Asp/Asn). This chain is Aspartate--tRNA(Asp/Asn) ligase, found in Bacillus anthracis (strain CDC 684 / NRRL 3495).